An 811-amino-acid chain; its full sequence is Bifunctional enzyme MurC/Ddl (811 aa).

Residues 1 to 450 (MNRKNHYHFI…GNALKDFEPK (450 aa)) are UDP-N-acetylmuramate--alanine ligase. Residues 111 to 117 (GSHGKTT) and 607 to 662 (LETF…SREI) contribute to the ATP site. Positions 451–811 (KLSVGVVCGG…NKQCLLTAKS (361 aa)) are D-alanine--D-alanine ligase. An ATP-grasp domain is found at 574 to 785 (KRLAASVGVP…FEQIVHQLII (212 aa)). D739, E752, and N754 together coordinate Mg(2+).

The protein in the N-terminal section; belongs to the MurCDEF family. In the C-terminal section; belongs to the D-alanine--D-alanine ligase family. Mg(2+) is required as a cofactor. Mn(2+) serves as cofactor.

It localises to the cytoplasm. It catalyses the reaction UDP-N-acetyl-alpha-D-muramate + L-alanine + ATP = UDP-N-acetyl-alpha-D-muramoyl-L-alanine + ADP + phosphate + H(+). The enzyme catalyses 2 D-alanine + ATP = D-alanyl-D-alanine + ADP + phosphate + H(+). Its pathway is cell wall biogenesis; peptidoglycan biosynthesis. The sequence is that of Bifunctional enzyme MurC/Ddl (murC/ddlA) from Chlamydia caviae (strain ATCC VR-813 / DSM 19441 / 03DC25 / GPIC) (Chlamydophila caviae).